Consider the following 520-residue polypeptide: 2-isopropylmalate synthase (520 aa).

The region spanning 12–274 is the Pyruvate carboxyltransferase domain; the sequence is IRIFDTTLRD…DTAINTPRIV (263 aa). 4 residues coordinate Mn(2+): D21, H209, H211, and N245. A regulatory domain region spans residues 396–520; it reads RLASMTISDV…VVAGKTAAVA (125 aa).

Belongs to the alpha-IPM synthase/homocitrate synthase family. LeuA type 1 subfamily. As to quaternary structure, homodimer. Mn(2+) serves as cofactor.

Its subcellular location is the cytoplasm. The enzyme catalyses 3-methyl-2-oxobutanoate + acetyl-CoA + H2O = (2S)-2-isopropylmalate + CoA + H(+). The protein operates within amino-acid biosynthesis; L-leucine biosynthesis; L-leucine from 3-methyl-2-oxobutanoate: step 1/4. In terms of biological role, catalyzes the condensation of the acetyl group of acetyl-CoA with 3-methyl-2-oxobutanoate (2-ketoisovalerate) to form 3-carboxy-3-hydroxy-4-methylpentanoate (2-isopropylmalate). The polypeptide is 2-isopropylmalate synthase (Xanthomonas campestris pv. campestris (strain B100)).